The chain runs to 261 residues: Calbindin (261 aa).

Ala-2 is subject to N-acetylalanine. The interaction with RANBP9 stretch occupies residues 2-7 (AESHLQ). 5 EF-hand domains span residues 11 to 46 (ITAS…LLQA), 53 to 88 (ELSP…EENF), 98 to 133 (KSCE…LLEK), 142 to 177 (KLAE…QENF), and 186 to 221 (MCGK…LCEK). Ca(2+) contacts are provided by Asp-24, Asp-26, Ser-28, Tyr-30, and Glu-35. Residues Asp-111, Asp-113, Ser-115, Glu-122, Asp-155, Asn-157, Asp-159, Lys-161, Glu-166, Asp-199, Asp-201, Asn-203, Tyr-205, and Glu-210 each coordinate Ca(2+).

It belongs to the calbindin family. In terms of assembly, interacts with RANBP9.

Buffers cytosolic calcium. May stimulate a membrane Ca(2+)-ATPase and a 3',5'-cyclic nucleotide phosphodiesterase. In Rattus norvegicus (Rat), this protein is Calbindin (Calb1).